The primary structure comprises 407 residues: L-amino-acid oxidase (407 aa).

Cysteine 10 and cysteine 94 are disulfide-bonded. Asparagine 93 carries an N-linked (GlcNAc...) asparagine glycan. Residue histidine 144 coordinates substrate. Residue valine 182 coordinates FAD. A disulfide bridge links cysteine 252 with cysteine 333. Residue asparagine 282 is glycosylated (N-linked (GlcNAc...) asparagine). Tyrosine 293 contacts substrate. Residues glutamate 378 and 385–390 (GWIDST) contribute to the FAD site. 385–386 (GW) lines the substrate pocket.

Belongs to the flavin monoamine oxidase family. FIG1 subfamily. In terms of assembly, homodimer; non-covalently linked. FAD serves as cofactor. In terms of tissue distribution, expressed by the venom gland.

The protein resides in the secreted. The catalysed reaction is an L-alpha-amino acid + O2 + H2O = a 2-oxocarboxylate + H2O2 + NH4(+). It carries out the reaction L-leucine + O2 + H2O = 4-methyl-2-oxopentanoate + H2O2 + NH4(+). The enzyme catalyses L-phenylalanine + O2 + H2O = 3-phenylpyruvate + H2O2 + NH4(+). It catalyses the reaction L-isoleucine + O2 + H2O = (S)-3-methyl-2-oxopentanoate + H2O2 + NH4(+). The catalysed reaction is L-aspartate + O2 + H2O = oxaloacetate + H2O2 + NH4(+). It carries out the reaction L-lysine + O2 + H2O = 6-amino-2-oxohexanoate + H2O2 + NH4(+). The enzyme catalyses L-glutamate + O2 + H2O = H2O2 + 2-oxoglutarate + NH4(+). In terms of biological role, catalyzes an oxidative deamination of predominantly hydrophobic and aromatic L-amino acids, thus producing hydrogen peroxide that may contribute to the diverse toxic effects of this enzyme. Is highly active on L-Leu followed by L-Phe and L-Ile, moderately active on L-Asp, L-Glu, and L-Lys, and not active on L-Pro, L-Asn, L-Gly, L-Ser and L-Cys. Exhibits diverse biological activities such as antibacterial activity (Minimal inhibitory concentrations (MIC) are 9.0 ug/ml against S.aureus, 144.0 ug/ml against P.aeruginosa and 288.0 ug/ml against E.coli) and inhibition of ADP- and TMVA-induced platelet aggregation. Effects of snake L-amino oxidases on platelets are controversial, since they either induce aggregation or inhibit agonist-induced aggregation. These different effects are probably due to different experimental conditions. Unlike other snake venom L-amino acid oxidases, does not induce hemorrhage. This protein may also induce hemolysis, edema, apoptosis and have antiparasitic activities. The protein is L-amino-acid oxidase of Daboia siamensis (Eastern Russel's viper).